Consider the following 312-residue polypeptide: NADH-ubiquinone oxidoreductase chain 1 (312 aa).

Helical transmembrane passes span 3 to 23 (FILS…SVAF), 77 to 97 (ISPI…PFFV), 104 to 124 (LGGL…MVAG), 150 to 170 (LALI…VYFF), 174 to 194 (IYVW…TISL), 226 to 246 (LIFM…CVIF), 250 to 270 (DVFN…FIWA), and 289 to 309 (CFLS…ILLF).

It belongs to the complex I subunit 1 family.

It is found in the mitochondrion inner membrane. It carries out the reaction a ubiquinone + NADH + 5 H(+)(in) = a ubiquinol + NAD(+) + 4 H(+)(out). Core subunit of the mitochondrial membrane respiratory chain NADH dehydrogenase (Complex I) that is believed to belong to the minimal assembly required for catalysis. Complex I functions in the transfer of electrons from NADH to the respiratory chain. The immediate electron acceptor for the enzyme is believed to be ubiquinone. This chain is NADH-ubiquinone oxidoreductase chain 1 (mt:ND1), found in Drosophila subobscura (Fruit fly).